Reading from the N-terminus, the 631-residue chain is Phosphomethylpyrimidine synthase (631 aa).

Substrate contacts are provided by residues N239, M268, Y297, H333, 353–355 (SRG), 394–397 (DGLR), and E433. H437 lines the Zn(2+) pocket. Y460 is a substrate binding site. Position 501 (H501) interacts with Zn(2+). Positions 581, 584, and 589 each coordinate [4Fe-4S] cluster.

The protein belongs to the ThiC family. Homodimer. [4Fe-4S] cluster is required as a cofactor.

The enzyme catalyses 5-amino-1-(5-phospho-beta-D-ribosyl)imidazole + S-adenosyl-L-methionine = 4-amino-2-methyl-5-(phosphooxymethyl)pyrimidine + CO + 5'-deoxyadenosine + formate + L-methionine + 3 H(+). It functions in the pathway cofactor biosynthesis; thiamine diphosphate biosynthesis. Its function is as follows. Catalyzes the synthesis of the hydroxymethylpyrimidine phosphate (HMP-P) moiety of thiamine from aminoimidazole ribotide (AIR) in a radical S-adenosyl-L-methionine (SAM)-dependent reaction. This Salmonella paratyphi B (strain ATCC BAA-1250 / SPB7) protein is Phosphomethylpyrimidine synthase.